The primary structure comprises 1319 residues: DNA-directed RNA polymerase subunit beta' (1319 aa).

4 residues coordinate Zn(2+): Cys60, Cys62, Cys75, and Cys78. Positions 535, 537, and 539 each coordinate Mg(2+). Zn(2+)-binding residues include Cys890, Cys971, Cys978, and Cys981.

Belongs to the RNA polymerase beta' chain family. In terms of assembly, the RNAP catalytic core consists of 2 alpha, 1 beta, 1 beta' and 1 omega subunit. When a sigma factor is associated with the core the holoenzyme is formed, which can initiate transcription. The cofactor is Mg(2+). It depends on Zn(2+) as a cofactor.

It catalyses the reaction RNA(n) + a ribonucleoside 5'-triphosphate = RNA(n+1) + diphosphate. Functionally, DNA-dependent RNA polymerase catalyzes the transcription of DNA into RNA using the four ribonucleoside triphosphates as substrates. This is DNA-directed RNA polymerase subunit beta' from Mycobacteroides abscessus (strain ATCC 19977 / DSM 44196 / CCUG 20993 / CIP 104536 / JCM 13569 / NCTC 13031 / TMC 1543 / L948) (Mycobacterium abscessus).